A 399-amino-acid chain; its full sequence is 3-phosphoshikimate 1-carboxyvinyltransferase (399 aa).

3-phosphoshikimate is bound by residues K19, S20, and R24. A phosphoenolpyruvate-binding site is contributed by K19. The phosphoenolpyruvate site is built by G83 and R111. Positions 152, 153, 154, 288, 310, and 314 each coordinate 3-phosphoshikimate. Q154 is a binding site for phosphoenolpyruvate. D288 serves as the catalytic Proton acceptor. Residues R318, R359, and K385 each coordinate phosphoenolpyruvate.

This sequence belongs to the EPSP synthase family. In terms of assembly, monomer.

The protein localises to the cytoplasm. It carries out the reaction 3-phosphoshikimate + phosphoenolpyruvate = 5-O-(1-carboxyvinyl)-3-phosphoshikimate + phosphate. Its pathway is metabolic intermediate biosynthesis; chorismate biosynthesis. Catalyzes the transfer of the enolpyruvyl moiety of phosphoenolpyruvate (PEP) to the 5-hydroxyl of shikimate-3-phosphate (S3P) to produce enolpyruvyl shikimate-3-phosphate and inorganic phosphate. The chain is 3-phosphoshikimate 1-carboxyvinyltransferase from Thermococcus kodakarensis (strain ATCC BAA-918 / JCM 12380 / KOD1) (Pyrococcus kodakaraensis (strain KOD1)).